The sequence spans 298 residues: MGIPGLEGLHTWISIPFSFMYIVAVAGNIFLIFLIMTERSLHEPMYLFLSMLASADFLLATAAAPKVLAILWFHSMDISFGSCVSQMFFIHFIFVAESAILLAMAFDRYVAICYPLRYTILTSSAVRKIGIAAVVRSFFICCPFIFLVYRLTYCGRNIIPHSYCEHIARLACGNINVNIIYGLTVALLSTGLDIVLIIISYTMILHSVFQISSWAARFKALSTCGSHICVIFMFYTPAFFSFLAHRFGGKTIPHHIHILVGSLYVLVPPMLNPIIYGVKTKQIKDRVILLFSPISVCC.

Residues Met1–Ser14 are Extracellular-facing. Residues Ile15 to Ile35 traverse the membrane as a helical segment. Residues Met36–Glu43 are Cytoplasmic-facing. Residues Pro44 to Ala64 form a helical membrane-spanning segment. At Pro65–Ser85 the chain is on the extracellular side. Residues Cys83 and Cys164 are joined by a disulfide bond. A helical transmembrane segment spans residues Gln86 to Phe106. At Asp107 to Lys128 the chain is on the cytoplasmic side. The helical transmembrane segment at Ile129–Tyr149 threads the bilayer. Topologically, residues Arg150–Asn178 are extracellular. A helical membrane pass occupies residues Ile179–Ile199. Residues Ser200 to Thr223 are Cytoplasmic-facing. Residues Cys224–Ala244 form a helical membrane-spanning segment. At His245 to His257 the chain is on the extracellular side. Residues Ile258–Val278 traverse the membrane as a helical segment. Over Lys279–Cys298 the chain is Cytoplasmic.

This sequence belongs to the G-protein coupled receptor 1 family.

The protein localises to the cell membrane. Functionally, odorant receptor. The polypeptide is Olfactory receptor 52Z1P (Homo sapiens (Human)).